Here is a 728-residue protein sequence, read N- to C-terminus: Catalase-peroxidase 1 (728 aa).

The segment at residues 91-218 (WHSAGTYRTA…LAAVQMGLIY (128 aa)) is a cross-link (tryptophyl-tyrosyl-methioninium (Trp-Tyr) (with M-244)). Catalysis depends on His-92, which acts as the Proton acceptor. A cross-link (tryptophyl-tyrosyl-methioninium (Tyr-Met) (with W-91)) is located at residues 218-244 (YVNPEGPDGNPDPVAAAHDIRETFARM). His-259 is a binding site for heme b.

This sequence belongs to the peroxidase family. Peroxidase/catalase subfamily. Homodimer or homotetramer. Heme b is required as a cofactor. Post-translationally, formation of the three residue Trp-Tyr-Met cross-link is important for the catalase, but not the peroxidase activity of the enzyme.

It catalyses the reaction H2O2 + AH2 = A + 2 H2O. The catalysed reaction is 2 H2O2 = O2 + 2 H2O. In terms of biological role, bifunctional enzyme with both catalase and broad-spectrum peroxidase activity. This Burkholderia cenocepacia (strain HI2424) protein is Catalase-peroxidase 1.